A 500-amino-acid polypeptide reads, in one-letter code: Matrilin-1 (500 aa).

The signal sequence occupies residues 1–29 (MKVTSGPAFALCSLLLLLLLLLQVPDSLS). One can recognise a VWFA 1 domain in the interval 30–226 (LVPQPRGHLC…AKKFQEAFCV (197 aa)). N-linked (GlcNAc...) asparagine glycosylation occurs at asparagine 80. The 41-residue stretch at 227-267 (VSDLCATGDHDCEQLCVSSPGSYTCACHEGFTLNSDGKTCN) folds into the EGF-like domain. 3 cysteine pairs are disulfide-bonded: cysteine 231–cysteine 242, cysteine 238–cysteine 251, and cysteine 253–cysteine 266. A VWFA 2 domain is found at 268–457 (VCRGGGSGSA…GKKLQKQICV (190 aa)). An N-linked (GlcNAc...) asparagine glycan is attached at asparagine 348. Residues 471-499 (EAKVEGLLQALTRKLEAVSGRLAVLENRI) adopt a coiled-coil conformation.

As to quaternary structure, homotrimer. Part of a complex composed of MATN1 (via VWFA1 domain), type 2 collagens and type 6 collagens. Forms a complex (via covalent bonds) with ACAN; the interaction increases in abundance with increasing age of the organism via an increase in occupancy of MATN1 binding sites. Interacts with COMP. Post-translationally, N-glycosylated; reduces binding affinity for type 2 collagens. As to expression, expressed in femoral head articular cartilage. Expressed in the trachea and extraskeletal tissue around the eye.

The protein localises to the secreted. It localises to the extracellular space. The protein resides in the extracellular matrix. In terms of biological role, a major component of the extracellular matrix of non-articular cartilage. Binds to type 2 collagens and forms long concatenated protein networks as part of the extracellular matrix. Required for the network-like organization and bundling of collagen fibrils surrounding chondrocytes in the zones of maturation and hypertrophy. Required for mechanotransduction and adaption to mechanical loading in cartilage chondrocytes, resulting in an increase in expression of the extracellular matrix components ACAN and COL2A1. Acts as a moderator of angiogenesis in response to injury. This chain is Matrilin-1, found in Mus musculus (Mouse).